Reading from the N-terminus, the 154-residue chain is Ribonuclease H (154 aa).

One can recognise an RNase H type-1 domain in the interval 5-146 (EQNIVYLYCD…ADELANRGID (142 aa)). Residues Asp-14, Glu-52, Asp-74, and Asp-138 each coordinate Mg(2+).

This sequence belongs to the RNase H family. As to quaternary structure, monomer. Mg(2+) serves as cofactor.

The protein localises to the cytoplasm. It catalyses the reaction Endonucleolytic cleavage to 5'-phosphomonoester.. Its function is as follows. Endonuclease that specifically degrades the RNA of RNA-DNA hybrids. This is Ribonuclease H from Coxiella burnetii (strain RSA 331 / Henzerling II).